The sequence spans 615 residues: MSKYTILDKINTPSDLKLIPESQLKILSAELRAFLVDTLDVSGGHFASSLGATELTVALHYVYNAPYDNIVWDVGHQTYIHKILTGRKDKLVTIKKDGGISGFPKRSESEYDTFGVGHSSTSISAALGMAIADRLQGKSSNTVAVIGDGAITGGMAFEALNHAGGIKEDILVILNDNEMSISDNVGGLSAHFSKIISGGFYNSIREKGKEVLKNIPPIFEFVKKIETQTKGMFVPANFFEDLGFYYVGPIDGHDVTELVKTLRILKDHKGPKLLHVITKKGKGYTKAESDPIKFHHVAPSFHSGENITTKISKPTYSNIFGDWICQKAAKDKRLVGITPAMKEGSDLIRFSQLYPHRYFDVAIAEQHAVTFAGGLACQGLKPVVAIYSTFLQRAYDQVIHDIALQNLDVLYAVDRAGLVGADGATHDGSFDLAFMRCIPNHVIMTPSDENETYHMLEFGYEYNGPAMVRYPRGAGIGAEITGSLDLELGKAKIVKQGSKIAILNFGTLLPLAKQLAEKYHATVIDMRFVKPLDKIMLDKVSQTHEIILTLEENCIAGGAGSAVNEYFVAKDLSNKIIVRNFGLQDKFLNHGTKDLLLAQSKLCVENISKELDKLI.

Residues His-76 and 117–119 contribute to the thiamine diphosphate site; that span reads GHS. Asp-148 provides a ligand contact to Mg(2+). Residues 149–150, Asn-177, Tyr-284, and Glu-365 contribute to the thiamine diphosphate site; that span reads GA. Asn-177 serves as a coordination point for Mg(2+).

The protein belongs to the transketolase family. DXPS subfamily. In terms of assembly, homodimer. The cofactor is Mg(2+). Thiamine diphosphate is required as a cofactor.

The enzyme catalyses D-glyceraldehyde 3-phosphate + pyruvate + H(+) = 1-deoxy-D-xylulose 5-phosphate + CO2. It functions in the pathway metabolic intermediate biosynthesis; 1-deoxy-D-xylulose 5-phosphate biosynthesis; 1-deoxy-D-xylulose 5-phosphate from D-glyceraldehyde 3-phosphate and pyruvate: step 1/1. Its function is as follows. Catalyzes the acyloin condensation reaction between C atoms 2 and 3 of pyruvate and glyceraldehyde 3-phosphate to yield 1-deoxy-D-xylulose-5-phosphate (DXP). In Francisella tularensis subsp. holarctica (strain FTNF002-00 / FTA), this protein is 1-deoxy-D-xylulose-5-phosphate synthase.